The primary structure comprises 454 residues: Phosphoglucosamine mutase (454 aa).

Catalysis depends on Ser104, which acts as the Phosphoserine intermediate. 4 residues coordinate Mg(2+): Ser104, Asp241, Asp243, and Asp245. Ser104 carries the post-translational modification Phosphoserine.

The protein belongs to the phosphohexose mutase family. Requires Mg(2+) as cofactor. Post-translationally, activated by phosphorylation.

The enzyme catalyses alpha-D-glucosamine 1-phosphate = D-glucosamine 6-phosphate. Functionally, catalyzes the conversion of glucosamine-6-phosphate to glucosamine-1-phosphate. This chain is Phosphoglucosamine mutase, found in Paenarthrobacter aurescens (strain TC1).